The sequence spans 388 residues: Flavin oxidoreductase hxnT (388 aa).

Belongs to the NADH:flavin oxidoreductase/NADH oxidase family. FMN is required as a cofactor.

Flavin oxidoreductase, part of the hnx cluster involved in the purine degradation. The nicotinate hydroxylase hnxS accepts nicotinate as a substrate and catalyzes the first step of nicotinate catabolism. The major facilitator-type transporters hxnP and hxnZ are probably involved in the uptake of nicotinate-derived metabolites, and the oxidoreductases hxnT and hxnY in the further metabolism of 6-OH nicotinic acid. The polypeptide is Flavin oxidoreductase hxnT (Emericella nidulans (strain FGSC A4 / ATCC 38163 / CBS 112.46 / NRRL 194 / M139) (Aspergillus nidulans)).